Reading from the N-terminus, the 122-residue chain is MVSKKSRTEVRVKKHNRMRNHLAGTAQRPRLAVFRSNNHMYAQIIDDTVGNTLVSASTLDKDIKAELEKTNNVDAAAKLGTVIAKKALDKGISTVVFDRGGFIYAGKVKALAEAAREAGLDF.

It belongs to the universal ribosomal protein uL18 family. In terms of assembly, part of the 50S ribosomal subunit; part of the 5S rRNA/L5/L18/L25 subcomplex. Contacts the 5S and 23S rRNAs.

Its function is as follows. This is one of the proteins that bind and probably mediate the attachment of the 5S RNA into the large ribosomal subunit, where it forms part of the central protuberance. The protein is Large ribosomal subunit protein uL18 of Agathobacter rectalis (strain ATCC 33656 / DSM 3377 / JCM 17463 / KCTC 5835 / VPI 0990) (Eubacterium rectale).